A 345-amino-acid chain; its full sequence is Phenylalanine--tRNA ligase alpha subunit (345 aa).

Glutamate 259 contacts Mg(2+).

The protein belongs to the class-II aminoacyl-tRNA synthetase family. Phe-tRNA synthetase alpha subunit type 1 subfamily. Tetramer of two alpha and two beta subunits. Mg(2+) serves as cofactor.

The protein resides in the cytoplasm. The catalysed reaction is tRNA(Phe) + L-phenylalanine + ATP = L-phenylalanyl-tRNA(Phe) + AMP + diphosphate + H(+). The sequence is that of Phenylalanine--tRNA ligase alpha subunit from Nitrosomonas europaea (strain ATCC 19718 / CIP 103999 / KCTC 2705 / NBRC 14298).